The primary structure comprises 587 residues: DNA ligase (587 aa).

Residues 32–36 (DILYD), 84–85 (SL), and Asp116 each bind NAD(+). The active-site N6-AMP-lysine intermediate is Lys118. Positions 139, 176, 293, and 317 each coordinate NAD(+). Zn(2+)-binding residues include Cys411, Cys414, Cys429, and Cys435.

The protein belongs to the NAD-dependent DNA ligase family. LigA subfamily. Requires Mg(2+) as cofactor. Mn(2+) is required as a cofactor.

The enzyme catalyses NAD(+) + (deoxyribonucleotide)n-3'-hydroxyl + 5'-phospho-(deoxyribonucleotide)m = (deoxyribonucleotide)n+m + AMP + beta-nicotinamide D-nucleotide.. Functionally, DNA ligase that catalyzes the formation of phosphodiester linkages between 5'-phosphoryl and 3'-hydroxyl groups in double-stranded DNA using NAD as a coenzyme and as the energy source for the reaction. It is essential for DNA replication and repair of damaged DNA. The chain is DNA ligase from Buchnera aphidicola subsp. Cinara cedri (strain Cc).